Here is a 440-residue protein sequence, read N- to C-terminus: Protein TENP (440 aa).

In terms of tissue distribution, expressed in developing retina and brain, but not in heart, liver or kidney. In brain, located in a narrow strip in the boundary between the ventricular zone (consisting of proliferating cells) and the intermediate zone (consisting of postmitotic, differentiating cells). Expressed in all major regions of the developing brain, including the myelencephalon, the mesencephalon, the telencephalon and the diencephalon. In the developing retina, expression is scattered across the retinal neural epithelium. Expressed in egg white (at protein level). Expressed in the magnum of the oviduct (at protein level).

Its function is as follows. May play a role in the developmental transition from cell proliferation to cell differentiation during neurogenesis. The chain is Protein TENP (TENP) from Gallus gallus (Chicken).